The primary structure comprises 294 residues: ATP synthase gamma chain (294 aa).

This sequence belongs to the ATPase gamma chain family. As to quaternary structure, F-type ATPases have 2 components, CF(1) - the catalytic core - and CF(0) - the membrane proton channel. CF(1) has five subunits: alpha(3), beta(3), gamma(1), delta(1), epsilon(1). CF(0) has three main subunits: a, b and c.

The protein resides in the cell inner membrane. Produces ATP from ADP in the presence of a proton gradient across the membrane. The gamma chain is believed to be important in regulating ATPase activity and the flow of protons through the CF(0) complex. This Campylobacter jejuni subsp. jejuni serotype O:23/36 (strain 81-176) protein is ATP synthase gamma chain.